Reading from the N-terminus, the 518-residue chain is Mitochondrial 2-methylisocitrate lyase (518 aa).

The protein belongs to the isocitrate lyase/PEP mutase superfamily. Isocitrate lyase family.

It localises to the mitochondrion matrix. The protein localises to the cytoplasm. It carries out the reaction (2S,3R)-3-hydroxybutane-1,2,3-tricarboxylate = pyruvate + succinate. It participates in organic acid metabolism; propanoate degradation. Its function is as follows. Catalyzes the formation of pyruvate and succinate from 2-methylisocitrate during the metabolism of endogenous propionyl-CoA. Does not act on isocitrate. In Schizosaccharomyces pombe (strain 972 / ATCC 24843) (Fission yeast), this protein is Mitochondrial 2-methylisocitrate lyase (icl2).